The following is a 415-amino-acid chain: MQQDYLSQQRFSDLSLHPIVRDTLAKKGFDFCTPIQALSLPISLNGRDVAGQAQTGTGKTMAFLTATFHHLLTHQDPNLEYPHPRALILASTRELAVQISNDAEFLAKACGLKTALAYGGDGYDKQLQAIERGVDILIGTTGRVIDYVKQGVIGLDEIQVVVLDEADRMFDLGFIRDIRYLLRKCPTPQVRLTMLFSATLSYKVRELAFEDMNDPEYIEIEPEQKTGHRIKEELFYPSNQDKMALLLTLMEDEWPERCIVFANTKHRCEEIWGYLAADGHRVGLLTGDVAQKKRLSLLKQFTDGDLDILVATDVAARGLHISDVTHVFNYDLPDDREDYVHRIGRTGRAGESGVSISFACEEYAMNLPAIEEYIGHSIPVSQYETEALLELPKPYRLKRAVPPQGHTRHRSYHTK.

Residues 9–37 (QRFSDLSLHPIVRDTLAKKGFDFCTPIQA) carry the Q motif motif. The 179-residue stretch at 40–218 (LPISLNGRDV…FEDMNDPEYI (179 aa)) folds into the Helicase ATP-binding domain. 53 to 60 (AQTGTGKT) contacts ATP. The DEAD box motif lies at 164–167 (DEAD). The Helicase C-terminal domain occupies 241-389 (DKMALLLTLM…VSQYETEALL (149 aa)).

It belongs to the DEAD box helicase family. RhlB subfamily. Component of the RNA degradosome, which is a multiprotein complex involved in RNA processing and mRNA degradation.

It is found in the cytoplasm. It catalyses the reaction ATP + H2O = ADP + phosphate + H(+). Functionally, DEAD-box RNA helicase involved in RNA degradation. Has RNA-dependent ATPase activity and unwinds double-stranded RNA. The chain is ATP-dependent RNA helicase RhlB from Haemophilus influenzae (strain PittEE).